The following is a 361-amino-acid chain: Porphobilinogen deaminase (361 aa).

Ser-2 carries the N-acetylserine modification. Ser-69 bears the Phosphoserine mark. N6-acetyllysine is present on Lys-74. A Phosphoserine modification is found at Ser-147. Residue Cys-261 is modified to S-(dipyrrolylmethanemethyl)cysteine.

Belongs to the HMBS family. In terms of assembly, monomer. Dipyrromethane is required as a cofactor.

Its subcellular location is the cytoplasm. The protein resides in the cytosol. It catalyses the reaction 4 porphobilinogen + H2O = hydroxymethylbilane + 4 NH4(+). The protein operates within porphyrin-containing compound metabolism; protoporphyrin-IX biosynthesis; coproporphyrinogen-III from 5-aminolevulinate: step 2/4. In terms of biological role, as part of the heme biosynthetic pathway, catalyzes the sequential polymerization of four molecules of porphobilinogen to form hydroxymethylbilane, also known as preuroporphyrinogen. Catalysis begins with the assembly of the dipyrromethane cofactor by the apoenzyme from two molecules of porphobilinogen or from preuroporphyrinogen. The covalently linked cofactor acts as a primer, around which the tetrapyrrole product is assembled. In the last step of catalysis, the product, preuroporphyrinogen, is released, leaving the cofactor bound to the holodeaminase intact. This chain is Porphobilinogen deaminase (Hmbs), found in Mus musculus (Mouse).